The chain runs to 248 residues: 2,3-bisphosphoglycerate-dependent phosphoglycerate mutase (248 aa).

Substrate-binding positions include Arg-8 to Asn-15, Thr-21 to Gly-22, Arg-60, Glu-87 to Tyr-90, Lys-98, Arg-114 to Arg-115, and Gly-183 to Asn-184. The active-site Tele-phosphohistidine intermediate is His-9. Glu-87 acts as the Proton donor/acceptor in catalysis.

The protein belongs to the phosphoglycerate mutase family. BPG-dependent PGAM subfamily.

The enzyme catalyses (2R)-2-phosphoglycerate = (2R)-3-phosphoglycerate. It participates in carbohydrate degradation; glycolysis; pyruvate from D-glyceraldehyde 3-phosphate: step 3/5. Functionally, catalyzes the interconversion of 2-phosphoglycerate and 3-phosphoglycerate. This chain is 2,3-bisphosphoglycerate-dependent phosphoglycerate mutase, found in Borreliella afzelii (strain PKo) (Borrelia afzelii).